The primary structure comprises 175 residues: NADH-ubiquinone oxidoreductase chain 6 (175 aa).

Helical transmembrane passes span 1–21 (MMYI…GFSS), 24–44 (SPVY…GIIM), 51–71 (LGLV…GYTI), 87–107 (VVLS…VWLF), 112–132 (ELVG…EGGF), and 148–168 (CGFW…FIAT).

The protein belongs to the complex I subunit 6 family. Core subunit of respiratory chain NADH dehydrogenase (Complex I) which is composed of 45 different subunits.

It is found in the mitochondrion inner membrane. The enzyme catalyses a ubiquinone + NADH + 5 H(+)(in) = a ubiquinol + NAD(+) + 4 H(+)(out). Core subunit of the mitochondrial membrane respiratory chain NADH dehydrogenase (Complex I) which catalyzes electron transfer from NADH through the respiratory chain, using ubiquinone as an electron acceptor. Essential for the catalytic activity and assembly of complex I. This chain is NADH-ubiquinone oxidoreductase chain 6 (MT-ND6), found in Elephas maximus (Indian elephant).